The sequence spans 190 residues: Potassium-transporting ATPase KdpC subunit (190 aa).

A helical transmembrane segment spans residues Thr10–Gly30.

The protein belongs to the KdpC family. The system is composed of three essential subunits: KdpA, KdpB and KdpC.

It is found in the cell inner membrane. Part of the high-affinity ATP-driven potassium transport (or Kdp) system, which catalyzes the hydrolysis of ATP coupled with the electrogenic transport of potassium into the cytoplasm. This subunit acts as a catalytic chaperone that increases the ATP-binding affinity of the ATP-hydrolyzing subunit KdpB by the formation of a transient KdpB/KdpC/ATP ternary complex. The chain is Potassium-transporting ATPase KdpC subunit from Escherichia coli O127:H6 (strain E2348/69 / EPEC).